Here is a 212-residue protein sequence, read N- to C-terminus: Uracil phosphoribosyltransferase (212 aa).

Residues R78, R103, and D130–S138 each bind 5-phospho-alpha-D-ribose 1-diphosphate. Uracil-binding positions include I193 and G198–A200. D199 contacts 5-phospho-alpha-D-ribose 1-diphosphate.

It belongs to the UPRTase family. The cofactor is Mg(2+).

It catalyses the reaction UMP + diphosphate = 5-phospho-alpha-D-ribose 1-diphosphate + uracil. Its pathway is pyrimidine metabolism; UMP biosynthesis via salvage pathway; UMP from uracil: step 1/1. With respect to regulation, allosterically activated by GTP. Catalyzes the conversion of uracil and 5-phospho-alpha-D-ribose 1-diphosphate (PRPP) to UMP and diphosphate. In Bordetella petrii (strain ATCC BAA-461 / DSM 12804 / CCUG 43448), this protein is Uracil phosphoribosyltransferase.